Reading from the N-terminus, the 340-residue chain is Protein RecA (340 aa).

65 to 72 (GPESGGKT) is a binding site for ATP.

It belongs to the RecA family.

Its subcellular location is the cytoplasm. Can catalyze the hydrolysis of ATP in the presence of single-stranded DNA, the ATP-dependent uptake of single-stranded DNA by duplex DNA, and the ATP-dependent hybridization of homologous single-stranded DNAs. It interacts with LexA causing its activation and leading to its autocatalytic cleavage. This is Protein RecA from Thermus aquaticus.